The sequence spans 59 residues: Probable stress-associated endoplasmic reticulum protein (59 aa).

Positions 1–30 (MSQSRTLRQKSQKYQENIEKRGVASPKKKE) are disordered. Topologically, residues 1–34 (MSQSRTLRQKSQKYQENIEKRGVASPKKKEDGLN) are cytoplasmic. Residues 16–30 (ENIEKRGVASPKKKE) are compositionally biased toward basic and acidic residues. A helical; Anchor for type IV membrane protein transmembrane segment spans residues 35–55 (INPYVLGFIIFVVVGSTLLQI). The Extracellular portion of the chain corresponds to 56–59 (LKGQ).

The protein belongs to the RAMP4 family.

It is found in the membrane. The protein localises to the endoplasmic reticulum membrane. Functionally, may interact with target proteins during translocation into the lumen of the endoplasmic reticulum. May protect unfolded target proteins against degradation and facilitate correct glycosylation. In Dictyostelium discoideum (Social amoeba), this protein is Probable stress-associated endoplasmic reticulum protein (serp).